The primary structure comprises 336 residues: MYYPFVRKALFQLDPERAHEFTFQQLRRVTGTPLEALVRQKVPAKPVSCMGLTFKNPLGLAAGLDKDGECIDALGAMGFGSIEIGTVTPRPQPGNDKPRLFRLVDAEGLINRMGFNNLGVDNLVENVKKAHFDGILGINIGKNKDTPVENGKDDYLICMEKIYAYAGYIAINISSPNTPGLRTLQYGEALDDLLTAIKNKQNDLQTIHHKYVPIAVKIAPDLSEDELIQVADSLVRHNIDGVIATNTTLDRSLVQGMKNCDETGGLSGRPLQLKSTEIIRRLSQELKEQLPIIGVGGIDSVIAAREKMAAGATLVQIYSGFIFKGPQLIKEIVTHI.

FMN is bound by residues 62-66 and threonine 86; that span reads AGLDK. Position 66 (lysine 66) interacts with substrate. 111–115 serves as a coordination point for substrate; that stretch reads NRMGF. FMN-binding residues include asparagine 139 and asparagine 172. Asparagine 172 serves as a coordination point for substrate. Serine 175 acts as the Nucleophile in catalysis. Position 177 (asparagine 177) interacts with substrate. Lysine 217 and threonine 245 together coordinate FMN. 246–247 serves as a coordination point for substrate; the sequence is NT. Residues glycine 268, glycine 297, and 318 to 319 each bind FMN; that span reads YS.

The protein belongs to the dihydroorotate dehydrogenase family. Type 2 subfamily. In terms of assembly, monomer. Requires FMN as cofactor.

The protein localises to the cell membrane. The enzyme catalyses (S)-dihydroorotate + a quinone = orotate + a quinol. Its pathway is pyrimidine metabolism; UMP biosynthesis via de novo pathway; orotate from (S)-dihydroorotate (quinone route): step 1/1. In terms of biological role, catalyzes the conversion of dihydroorotate to orotate with quinone as electron acceptor. In Citrobacter koseri (strain ATCC BAA-895 / CDC 4225-83 / SGSC4696), this protein is Dihydroorotate dehydrogenase (quinone).